The chain runs to 206 residues: Inner membrane-spanning protein YciB (206 aa).

The next 5 helical transmembrane spans lie at 22 to 42 (IYTATGALIVASAVQIILTYF), 50 to 70 (MQVITFLMVAVFGGMTIFLHD), 76 to 96 (WKVTIVYALFAIGLTVSHIMG), 118 to 138 (INWAWTLFFTLCAILNVYVAF), and 148 to 168 (FKVFGLLIATFAFTLLTGVYI). A compositionally biased stretch (basic and acidic residues) spans 178–189 (LPKDKHQQRDQE). The tract at residues 178–206 (LPKDKHQQRDQETQNDTQQELSGKNTEEK) is disordered. Over residues 191–206 (QNDTQQELSGKNTEEK) the composition is skewed to polar residues.

It belongs to the YciB family.

It is found in the cell inner membrane. Its function is as follows. Plays a role in cell envelope biogenesis, maintenance of cell envelope integrity and membrane homeostasis. The protein is Inner membrane-spanning protein YciB of Vibrio atlanticus (strain LGP32) (Vibrio splendidus (strain Mel32)).